The primary structure comprises 480 residues: Probable histone deacetylase 1-B (480 aa).

Residues 10–321 (KVCYYYDGDV…WTYETAVALD (312 aa)) are histone deacetylase. Residue His141 is part of the active site. A disordered region spans residues 387–480 (DSVHDDSGEE…KRVKEETKSV (94 aa)). Residues 401–416 (PDKRISIRSSDKRIAC) are compositionally biased toward basic and acidic residues. The span at 417–427 (DEEFSDSEDEG) shows a compositional bias: acidic residues. A compositionally biased stretch (basic and acidic residues) spans 443–480 (VKTEEEKEGEDKKDVKEEEKAKDEKTDSKRVKEETKSV).

The protein belongs to the histone deacetylase family. HD type 1 subfamily. In terms of assembly, found in a large complex with RBBP4 and MI-2.

Its subcellular location is the nucleus. The protein resides in the cytoplasm. The enzyme catalyses N(6)-acetyl-L-lysyl-[histone] + H2O = L-lysyl-[histone] + acetate. The catalysed reaction is N(6)-acetyl-L-lysyl-[protein] + H2O = L-lysyl-[protein] + acetate. It carries out the reaction N(6)-(2E)-butenoyl-L-lysyl-[protein] + H2O = (2E)-2-butenoate + L-lysyl-[protein]. Functionally, histone deacetylase that catalyzes the deacetylation of lysine residues on the N-terminal part of the core histones (H2A, H2B, H3 and H4). Histone deacetylation gives a tag for epigenetic repression and plays an important role in transcriptional regulation, cell cycle progression and developmental events. Histone deacetylases act via the formation of large multiprotein complexes. Also functions as a deacetylase for non-histone proteins. In addition to protein deacetylase activity, also has protein-lysine deacylase activity: acts as a protein decrotonylase by mediating decrotonylation ((2E)-butenoyl) of histones. The polypeptide is Probable histone deacetylase 1-B (hdac1-b) (Xenopus laevis (African clawed frog)).